The chain runs to 360 residues: Protein Wnt-2 (360 aa).

The first 25 residues, 1 to 25 (MNAPLGGIWLGLPLLLTWLSPEVSS), serve as a signal peptide directing secretion. Intrachain disulfides connect Cys-76-Cys-87, Cys-127-Cys-135, Cys-137-Cys-157, Cys-206-Cys-220, Cys-208-Cys-215, Cys-278-Cys-309, Cys-294-Cys-304, Cys-308-Cys-348, Cys-324-Cys-339, Cys-326-Cys-336, and Cys-331-Cys-332. Ser-212 carries the O-palmitoleoyl serine; by PORCN lipid modification. Asn-295 carries N-linked (GlcNAc...) asparagine glycosylation.

It belongs to the Wnt family. Post-translationally, palmitoleoylation is required for efficient binding to frizzled receptors. Depalmitoleoylation leads to Wnt signaling pathway inhibition.

It is found in the secreted. Its subcellular location is the extracellular space. The protein resides in the extracellular matrix. In terms of biological role, ligand for members of the frizzled family of seven transmembrane receptors. Probable developmental protein. May be a signaling molecule which affects the development of discrete regions of tissues. Is likely to signal over only few cell diameters. The sequence is that of Protein Wnt-2 (WNT2) from Oryctolagus cuniculus (Rabbit).